A 204-amino-acid chain; its full sequence is Outer-membrane lipoprotein carrier protein (204 aa).

The N-terminal stretch at 1 to 21 (MKKLLVACCVVSGMMSASVLA) is a signal peptide.

This sequence belongs to the LolA family. Monomer.

It is found in the periplasm. Participates in the translocation of lipoproteins from the inner membrane to the outer membrane. Only forms a complex with a lipoprotein if the residue after the N-terminal Cys is not an aspartate (The Asp acts as a targeting signal to indicate that the lipoprotein should stay in the inner membrane). The protein is Outer-membrane lipoprotein carrier protein of Edwardsiella ictaluri (strain 93-146).